Reading from the N-terminus, the 96-residue chain is MEHKEVVLLLLLFLKSGQGEPLDDYVNTQGPSLFSVTKKQLGAGSREECAAKCEEDKEFTCRAFQYHSKEQQCVIMAENRKSSIIIRMRDAVLFEK.

Positions 1 to 19 (MEHKEVVLLLLLFLKSGQG) are cleaved as a signal peptide. Residues 20 to 96 (EPLDDYVNTQ…RMRDAVLFEK (77 aa)) form the PAN domain. Disulfide bonds link cysteine 49-cysteine 73 and cysteine 53-cysteine 61.

Its subcellular location is the secreted. May bind noncovalently to lysine binding sites present in the kringle structures of plasminogen. This may interfere with the binding of fibrin or alpha-2-antiplasmin to plasminogen and may result in the localization of activity at sites necessary for extracellular matrix destruction. The polypeptide is Plasminogen-like protein B (PLGLB1) (Homo sapiens (Human)).